The chain runs to 577 residues: Proline--tRNA ligase (577 aa).

This sequence belongs to the class-II aminoacyl-tRNA synthetase family. ProS type 1 subfamily. As to quaternary structure, homodimer.

It is found in the cytoplasm. The catalysed reaction is tRNA(Pro) + L-proline + ATP = L-prolyl-tRNA(Pro) + AMP + diphosphate. In terms of biological role, catalyzes the attachment of proline to tRNA(Pro) in a two-step reaction: proline is first activated by ATP to form Pro-AMP and then transferred to the acceptor end of tRNA(Pro). As ProRS can inadvertently accommodate and process non-cognate amino acids such as alanine and cysteine, to avoid such errors it has two additional distinct editing activities against alanine. One activity is designated as 'pretransfer' editing and involves the tRNA(Pro)-independent hydrolysis of activated Ala-AMP. The other activity is designated 'posttransfer' editing and involves deacylation of mischarged Ala-tRNA(Pro). The misacylated Cys-tRNA(Pro) is not edited by ProRS. The sequence is that of Proline--tRNA ligase from Limosilactobacillus reuteri (strain DSM 20016) (Lactobacillus reuteri).